The chain runs to 517 residues: GTPase Obg (517 aa).

Positions 2-159 (ATFVDTVTLH…GDVVLELKVV (158 aa)) constitute an Obg domain. The OBG-type G domain occupies 160–336 (ADVALVGYPS…LSFALAELVK (177 aa)). GTP is bound by residues 166-173 (GYPSAGKS), 191-195 (FTTLH), 212-215 (DVPG), 288-291 (NKID), and 317-319 (STV). 2 residues coordinate Mg(2+): Ser173 and Thr193. Residues 355-439 (PRAVDEKPFT…GDGVVFDWEP (85 aa)) form the OCT domain. The interval 490 to 517 (EGEAGLWADEDGTGQDGTDEDATTDAKA) is disordered. Positions 497-517 (ADEDGTGQDGTDEDATTDAKA) are enriched in acidic residues.

Belongs to the TRAFAC class OBG-HflX-like GTPase superfamily. OBG GTPase family. Monomer. Mg(2+) serves as cofactor.

The protein localises to the cytoplasm. An essential GTPase which binds GTP, GDP and possibly (p)ppGpp with moderate affinity, with high nucleotide exchange rates and a fairly low GTP hydrolysis rate. Plays a role in control of the cell cycle, stress response, ribosome biogenesis and in those bacteria that undergo differentiation, in morphogenesis control. The polypeptide is GTPase Obg (Clavibacter sepedonicus (Clavibacter michiganensis subsp. sepedonicus)).